The chain runs to 369 residues: 4-hydroxy-3-methylbut-2-en-1-yl diphosphate synthase (flavodoxin) (369 aa).

Residues cysteine 270, cysteine 273, cysteine 305, and glutamate 312 each coordinate [4Fe-4S] cluster.

It belongs to the IspG family. The cofactor is [4Fe-4S] cluster.

The catalysed reaction is (2E)-4-hydroxy-3-methylbut-2-enyl diphosphate + oxidized [flavodoxin] + H2O + 2 H(+) = 2-C-methyl-D-erythritol 2,4-cyclic diphosphate + reduced [flavodoxin]. It functions in the pathway isoprenoid biosynthesis; isopentenyl diphosphate biosynthesis via DXP pathway; isopentenyl diphosphate from 1-deoxy-D-xylulose 5-phosphate: step 5/6. In terms of biological role, converts 2C-methyl-D-erythritol 2,4-cyclodiphosphate (ME-2,4cPP) into 1-hydroxy-2-methyl-2-(E)-butenyl 4-diphosphate. This chain is 4-hydroxy-3-methylbut-2-en-1-yl diphosphate synthase (flavodoxin), found in Pseudomonas putida (strain ATCC 47054 / DSM 6125 / CFBP 8728 / NCIMB 11950 / KT2440).